We begin with the raw amino-acid sequence, 152 residues long: Arginine repressor (152 aa).

It belongs to the ArgR family.

It localises to the cytoplasm. The protein operates within amino-acid biosynthesis; L-arginine biosynthesis [regulation]. Regulates arginine biosynthesis genes. In Lachnoclostridium phytofermentans (strain ATCC 700394 / DSM 18823 / ISDg) (Clostridium phytofermentans), this protein is Arginine repressor.